The following is a 183-amino-acid chain: MSSFFYKEILRMTLRFFTVTDEYIAYLRKFESKVHYQYENNASTYVGVVLKKNDFNYFIPLSSYKKGNPEKDKAMKKRSRIVTRLFEIGNINNPLGYLLHHNMIPVPDSELIPLPLDLKKPKHKMMQKQLIYMKSISEKIENKSEVVYRKAAHEKDGYYLKFSCDFKLLEAKATLYSKKSTFQ.

It belongs to the ToxN/AbiQ toxin family. As to quaternary structure, forms a triangular heterohexamer with a single 35-nt-long repeat of RNA antitoxin AntiQ.

Its subcellular location is the cytoplasm. In terms of biological role, toxic component of a type III toxin-antitoxin (TA) system. An endoribonuclease that is probably sequence-specific. It is neutralized by its cognate antitoxin RNA AntiQ, which has 2.8 35 nucleotide-long repeats. Cannot be cloned in L.lactis subsp. cremoris strain NZ9000 in the absence of the antitoxin gene; expression in strain NZ9000 even in the presence of antiQ inhibits growth in a bacteriostatic fashion. Confers resistance to 936 and c2 phages but not P335 phages in L.lactis, causes an abortive infection (Abi phenotype). Viral DNA is replicated but not cleaved from its concatemeric form, while the viral major structural protein is produced normally in the presence of this protein. Operon expression in E.coli confers resistance to 3 phages of the Myoviridae family (T4, RB69 and phage 2) and 1 of the Siphoviridae family (T5), but not other tested phages (T1, T3, lambda vir, HK97, Mu and pilH alpha). The presence of this operon in L.lactis subsp. lactis strain IL1403 during phage P008 infection alters the viral transcription profiles. This Lactococcus lactis subsp. lactis (Streptococcus lactis) protein is Endoribonuclease AbiQ.